A 217-amino-acid polypeptide reads, in one-letter code: Probable transaldolase (217 aa).

Lysine 83 serves as the catalytic Schiff-base intermediate with substrate.

This sequence belongs to the transaldolase family. Type 3B subfamily.

The protein resides in the cytoplasm. It carries out the reaction D-sedoheptulose 7-phosphate + D-glyceraldehyde 3-phosphate = D-erythrose 4-phosphate + beta-D-fructose 6-phosphate. It functions in the pathway carbohydrate degradation; pentose phosphate pathway; D-glyceraldehyde 3-phosphate and beta-D-fructose 6-phosphate from D-ribose 5-phosphate and D-xylulose 5-phosphate (non-oxidative stage): step 2/3. Transaldolase is important for the balance of metabolites in the pentose-phosphate pathway. The protein is Probable transaldolase of Novosphingobium aromaticivorans (strain ATCC 700278 / DSM 12444 / CCUG 56034 / CIP 105152 / NBRC 16084 / F199).